The sequence spans 603 residues: Serine/threonine-protein kinase HAL4/SAT4 (603 aa).

3 stretches are compositionally biased toward polar residues: residues 1–15, 30–60, and 68–85; these read MTGM…PQQT, RSGS…SASK, and TPTT…NTAG. Disordered stretches follow at residues 1–86, 150–171, and 267–301; these read MTGM…TAGV, LSPK…PTPT, and DKYP…THNI. A compositionally biased stretch (low complexity) spans 159–171; it reads NSNTAITPAPTPT. Residues 282 to 296 show a composition bias toward basic and acidic residues; sequence PERDIYRSDQKDSKN. Residues 316–590 form the Protein kinase domain; it reads GRCQEVLGKG…GKQILNSEWG (275 aa). ATP-binding positions include 322 to 330 and K353; that span reads LGKGAFGVV. D449 functions as the Proton acceptor in the catalytic mechanism.

The protein belongs to the protein kinase superfamily. Ser/Thr protein kinase family.

The catalysed reaction is L-seryl-[protein] + ATP = O-phospho-L-seryl-[protein] + ADP + H(+). It catalyses the reaction L-threonyl-[protein] + ATP = O-phospho-L-threonyl-[protein] + ADP + H(+). In terms of biological role, promotes K(+) uptake, by the potassium transporter TRK1-TRK2, which leads to the subsequent cellular resistance to toxic cations such as Na(+), Li(+) and Ca(2+). The sequence is that of Serine/threonine-protein kinase HAL4/SAT4 (SAT4) from Saccharomyces cerevisiae (strain ATCC 204508 / S288c) (Baker's yeast).